The following is a 497-amino-acid chain: Putative diacyglycerol O-acyltransferase Rv3480c (497 aa).

The active-site Proton acceptor is the histidine 143.

Belongs to the long-chain O-acyltransferase family.

It catalyses the reaction an acyl-CoA + a 1,2-diacyl-sn-glycerol = a triacyl-sn-glycerol + CoA. It carries out the reaction di-(9Z)-octadecenoylglycerol + (9Z)-octadecenoyl-CoA = 1,2,3-tri-(9Z-octadecenoyl)-glycerol + CoA. The catalysed reaction is hexadecan-1-ol + hexadecanoyl-CoA = hexadecanyl hexadecanoate + CoA. The protein operates within glycerolipid metabolism; triacylglycerol biosynthesis. In terms of biological role, upon expression in E.coli has a weak triacylglycerol synthase function, making triacylglycerol (TG) from diolein and long-chain fatty acyl-CoA. Also functions weakly as a wax synthase, as it incorporates palmityl alcohol into wax esters in the presence of palmitoyl-CoA. In Mycobacterium tuberculosis (strain ATCC 25618 / H37Rv), this protein is Putative diacyglycerol O-acyltransferase Rv3480c.